The primary structure comprises 534 residues: Hypothemycin biosynthesis cluster protein hpm4 (534 aa).

Disordered regions lie at residues 34–61 (IEPA…SDGP), 110–130 (LQSP…PLRL), and 236–287 (DGTG…KKCI). Low complexity-rich tracts occupy residues 112-127 (SPTT…SCAP) and 258-275 (TVSS…ACQT).

Its pathway is secondary metabolite biosynthesis. Functionally, part of the gene cluster that mediates the biosynthesis of hypothemycin, a resorcylic acid lactone (RAL) that irreversibly inhibits a subset of protein kinases with a conserved cysteine in the ATP binding site such as human ERK2. The first step is performed by both PKSs hmp3 and hmp8 and leads to the production of 7',8'-dehydrozearalenol (DHZ). The highly reducing PKS hpm8 synthesizes the reduced hexaketide (7S,11S,2E,8E)-7,11-dihydroxy-dodeca-2,8-dienoate, which is transferred downstream to the non-reducing PKS hpm3. Hpm3 then extends the reduced hexaketide to a nonaketide, after which regioselective cyclization and macrolactonization affords DHZ. The next step is the conversion of DHZ into aigialomycin C and is performed by the O-methyltransferase hmp5, the FAD-binding monooxygenase hmp7, and the cytochrome P450 monooxygenase hmp1. The wide substrate tolerance of the hmp5 and hmp7 implies that the reactions from DHZ to aigialomycin C can occur in any order. The steps from aigialomycin C to hypothemycin are less well established. The FAD-linked oxidoreductase hmp9 presumably catalyzes oxidation of the C-6' hydroxyl to a ketone. The timing of this oxidation is important, since the resulting enone functional group is a Michael acceptor that can react spontaneously with glutathione, an abundant metabolite in fungal cells. The glutathione S-transferase hmp2 catalyzes cis-trans isomerization of the 7',8' double bond with equilibrium favoring the trans isomer. The hpm6-encoded transporter might preferentially pump hypothemycin out of the cell relative to the trans isomer aigialomycin A. The cis-to-trans isomerization may be coupled with C-4' hydroxylation, since all known hypothemycin analogs containing the enone functional group also have hydroxyl groups at both C-4' and C-5'. This is Hypothemycin biosynthesis cluster protein hpm4 from Hypomyces subiculosus (Nectria subiculosa).